Here is a 558-residue protein sequence, read N- to C-terminus: S-layer protein (558 aa).

A signal peptide spans 1-28 (MAMSLKKIGAIAVGGAMVATALASGVAA). 7 N-linked (GlcNAc...) asparagine glycosylation sites follow: Asn112, Asn138, Asn158, Asn197, Asn226, Asn291, and Asn374.

It belongs to the Mj S-layer protein family.

Its subcellular location is the secreted. The protein resides in the cell wall. The protein localises to the S-layer. In terms of biological role, S-layer protein. The S-layer is a paracrystalline mono-layered assembly of proteins which coat the surface of the cell. This is S-layer protein (sla) from Methanocaldococcus jannaschii (strain ATCC 43067 / DSM 2661 / JAL-1 / JCM 10045 / NBRC 100440) (Methanococcus jannaschii).